The sequence spans 258 residues: UPF0246 protein YaaA (258 aa).

It belongs to the UPF0246 family.

In Escherichia coli (strain K12 / MC4100 / BW2952), this protein is UPF0246 protein YaaA.